Here is an 828-residue protein sequence, read N- to C-terminus: Translation initiation factor IF-2 (828 aa).

Disordered regions lie at residues 48-76 (SYSG…SEEF) and 112-137 (ASQE…EPKI). A compositionally biased stretch (polar residues) spans 49–58 (YSGSTTTLSL). A compositionally biased stretch (low complexity) spans 65 to 74 (LETGSSSGSE). The span at 116–126 (DPIEVEQEESS) shows a compositional bias: acidic residues. A compositionally biased stretch (basic and acidic residues) spans 127–137 (DTNKVKEEPKI). In terms of domain architecture, tr-type G spans 326–496 (SRAPVVTVMG…LLIAEMQNLK (171 aa)). The G1 stretch occupies residues 335 to 342 (GHVDHGKT). 335–342 (GHVDHGKT) contacts GTP. Residues 360–364 (GITQH) are G2. The segment at 382 to 385 (DTPG) is G3. GTP is bound by residues 382–386 (DTPGH) and 436–439 (NKID). A G4 region spans residues 436–439 (NKID). The segment at 472–474 (SAL) is G5.

The protein belongs to the TRAFAC class translation factor GTPase superfamily. Classic translation factor GTPase family. IF-2 subfamily.

It localises to the cytoplasm. One of the essential components for the initiation of protein synthesis. Protects formylmethionyl-tRNA from spontaneous hydrolysis and promotes its binding to the 30S ribosomal subunits. Also involved in the hydrolysis of GTP during the formation of the 70S ribosomal complex. In Rickettsia bellii (strain RML369-C), this protein is Translation initiation factor IF-2.